A 555-amino-acid chain; its full sequence is Urocanate hydratase (555 aa).

NAD(+) is bound by residues 51–52, Gln-129, 175–177, Glu-195, 262–266, 272–273, and Tyr-321; these read GG, GMG, QTSAH, and YL. The active site involves Cys-409. Residue Gly-491 participates in NAD(+) binding.

It belongs to the urocanase family. The cofactor is NAD(+).

It localises to the cytoplasm. It carries out the reaction 4-imidazolone-5-propanoate = trans-urocanate + H2O. Its pathway is amino-acid degradation; L-histidine degradation into L-glutamate; N-formimidoyl-L-glutamate from L-histidine: step 2/3. Its function is as follows. Catalyzes the conversion of urocanate to 4-imidazolone-5-propionate. The sequence is that of Urocanate hydratase from Xanthomonas campestris pv. campestris (strain ATCC 33913 / DSM 3586 / NCPPB 528 / LMG 568 / P 25).